Reading from the N-terminus, the 398-residue chain is Elongation factor Tu (398 aa).

One can recognise a tr-type G domain in the interval 10–207; the sequence is KPHVNIGTIG…TVDEYIPEPE (198 aa). The segment at 19–26 is G1; it reads GHVDHGKT. 19–26 serves as a coordination point for GTP; it reads GHVDHGKT. Mg(2+) is bound at residue Thr26. Residues 63–67 are G2; it reads GITIN. Positions 84 to 87 are G3; the sequence is DAPG. GTP-binding positions include 84-88 and 139-142; these read DAPGH and NKVD. The segment at 139–142 is G4; sequence NKVD. A G5 region spans residues 177–179; it reads SAL.

The protein belongs to the TRAFAC class translation factor GTPase superfamily. Classic translation factor GTPase family. EF-Tu/EF-1A subfamily. Monomer.

Its subcellular location is the cytoplasm. The catalysed reaction is GTP + H2O = GDP + phosphate + H(+). Functionally, GTP hydrolase that promotes the GTP-dependent binding of aminoacyl-tRNA to the A-site of ribosomes during protein biosynthesis. The protein is Elongation factor Tu of Streptococcus agalactiae serotype V (strain ATCC BAA-611 / 2603 V/R).